We begin with the raw amino-acid sequence, 250 residues long: MLPLQVSSLGVEGEGIWLALGTVGMLLGMVYFMAKGWDVQDPEQEEFYVITILIAGIAASSYLSMFFGFGLTEVELVNGRVIDVYWARYADWLFTTPLLLLDIGLLAGASNRDMASLITIDAFMIVTGLAATLMKVPVARYAFWTISTIAMLFVLYYLVVVVGEAASDASEEAQSTFNVLRNIILVAWAIYPVAWLVGTEGLGLVGLFGETLLFMILDLTAKIGFGFILLRSRAIVGGDSAPTPSAEAAD.

A run of 7 helical transmembrane segments spans residues 14–34 (EGIW…YFMA), 49–69 (VITI…FFGF), 89–109 (YADW…LAGA), 114–134 (MASL…ATLM), 142–162 (AFWT…VVVV), 183–203 (IILV…EGLG), and 210–230 (ETLL…FILL). Residue lysine 222 is modified to N6-(retinylidene)lysine.

Belongs to the archaeal/bacterial/fungal opsin family. The covalent binding of retinal to the apoprotein, bacterioopsin, generates bacteriorhodopsin.

It localises to the membrane. Its function is as follows. Light-driven proton pump. The protein is Bacteriorhodopsin-II (xop1) of Haloarcula marismortui (strain ATCC 43049 / DSM 3752 / JCM 8966 / VKM B-1809) (Halobacterium marismortui).